Consider the following 386-residue polypeptide: Patatin-10 (386 aa).

The first 23 residues, 1–23, serve as a signal peptide directing secretion; that stretch reads MATTKSFLILFFMILATTSSTCA. Residues 32–229 form the PNPLA domain; that stretch reads LSIDGGGIKG…TVGDPALLSL (198 aa). Residues 36 to 41 carry the GXGXXG motif; the sequence is GGGIKG. The GXSXG motif lies at 75 to 79; sequence GTSTG. The active-site Nucleophile is the serine 77. N-linked (GlcNAc...) asparagine glycosylation is present at asparagine 115. The active-site Proton acceptor is aspartate 215. The DGA/G signature appears at 215-217; sequence DGG. The stretch at 321–384 forms a coiled coil; the sequence is ENALTGTTTE…NRKKLRANKA (64 aa).

The protein belongs to the patatin family. Tuber.

The protein localises to the vacuole. Probable lipolytic acyl hydrolase (LAH), an activity which is thought to be involved in the response of tubers to pathogens. The polypeptide is Patatin-10 (Solanum tuberosum (Potato)).